Here is a 381-residue protein sequence, read N- to C-terminus: Putative acetyl-CoA C-acetyltransferase VraB (381 aa).

Residue Cys-86 is the Acyl-thioester intermediate of the active site. The active-site Proton acceptor is the His-338.

The protein belongs to the thiolase-like superfamily. Thiolase family.

The chain is Putative acetyl-CoA C-acetyltransferase VraB (vraB) from Staphylococcus haemolyticus (strain JCSC1435).